Here is a 129-residue protein sequence, read N- to C-terminus: Phosphoribosyl-AMP cyclohydrolase (129 aa).

Residue Asp87 participates in Mg(2+) binding. Cys88 is a Zn(2+) binding site. Residues Asp89 and Asp91 each contribute to the Mg(2+) site. Cys104 and Cys111 together coordinate Zn(2+).

Belongs to the PRA-CH family. Homodimer. The cofactor is Mg(2+). Requires Zn(2+) as cofactor.

The protein localises to the cytoplasm. The enzyme catalyses 1-(5-phospho-beta-D-ribosyl)-5'-AMP + H2O = 1-(5-phospho-beta-D-ribosyl)-5-[(5-phospho-beta-D-ribosylamino)methylideneamino]imidazole-4-carboxamide. It functions in the pathway amino-acid biosynthesis; L-histidine biosynthesis; L-histidine from 5-phospho-alpha-D-ribose 1-diphosphate: step 3/9. Its function is as follows. Catalyzes the hydrolysis of the adenine ring of phosphoribosyl-AMP. This chain is Phosphoribosyl-AMP cyclohydrolase, found in Ruegeria sp. (strain TM1040) (Silicibacter sp.).